A 228-amino-acid chain; its full sequence is ATP synthase subunit beta, mitochondrial (228 aa).

The N-terminal 31 residues, 1–31 (MFALRAAAKADKNLLPFLGQLSRSHAAKAAK), are a transit peptide targeting the mitochondrion. Position 183 to 190 (183 to 190 (GGAGVGKT)) interacts with ATP.

Belongs to the ATPase alpha/beta chains family. In terms of assembly, F-type ATPases have 2 components, CF(1) - the catalytic core - and CF(0) - the membrane proton channel. CF(1) has five subunits: alpha(3), beta(3), gamma(1), delta(1), epsilon(1). CF(0) has three main subunits: a, b and c.

The protein localises to the mitochondrion. The protein resides in the mitochondrion inner membrane. The catalysed reaction is ATP + H2O + 4 H(+)(in) = ADP + phosphate + 5 H(+)(out). Mitochondrial membrane ATP synthase (F(1)F(0) ATP synthase or Complex V) produces ATP from ADP in the presence of a proton gradient across the membrane which is generated by electron transport complexes of the respiratory chain. F-type ATPases consist of two structural domains, F(1) - containing the extramembraneous catalytic core, and F(0) - containing the membrane proton channel, linked together by a central stalk and a peripheral stalk. During catalysis, ATP synthesis in the catalytic domain of F(1) is coupled via a rotary mechanism of the central stalk subunits to proton translocation. Subunits alpha and beta form the catalytic core in F(1). Rotation of the central stalk against the surrounding alpha(3)beta(3) subunits leads to hydrolysis of ATP in three separate catalytic sites on the beta subunits. The protein is ATP synthase subunit beta, mitochondrial of Drosophila virilis (Fruit fly).